A 77-amino-acid polypeptide reads, in one-letter code: DNA-directed RNA polymerase subunit Rpo10 (77 aa).

Zn(2+) is bound by residues Cys-7, Cys-10, Cys-44, and Cys-45.

The protein belongs to the archaeal Rpo10/eukaryotic RPB10 RNA polymerase subunit family. As to quaternary structure, part of the RNA polymerase complex. Requires Zn(2+) as cofactor.

The protein localises to the cytoplasm. The enzyme catalyses RNA(n) + a ribonucleoside 5'-triphosphate = RNA(n+1) + diphosphate. In terms of biological role, DNA-dependent RNA polymerase (RNAP) catalyzes the transcription of DNA into RNA using the four ribonucleoside triphosphates as substrates. This chain is DNA-directed RNA polymerase subunit Rpo10, found in Aeropyrum pernix (strain ATCC 700893 / DSM 11879 / JCM 9820 / NBRC 100138 / K1).